A 66-amino-acid polypeptide reads, in one-letter code: UPF0370 protein YpfN (66 aa).

Residues 4 to 24 (LAKYWWILVLVFLVGVLLNVI) traverse the membrane as a helical segment. Residues 39-66 (KPELPPHRDFNDKWDDEDDWPKKDQSKK) form a disordered region. A compositionally biased stretch (basic and acidic residues) spans 42-51 (LPPHRDFNDK).

It belongs to the UPF0370 family.

The protein resides in the cell membrane. The chain is UPF0370 protein YpfN from Salmonella arizonae (strain ATCC BAA-731 / CDC346-86 / RSK2980).